The primary structure comprises 332 residues: 2,3-diketo-L-gulonate reductase (332 aa).

The Proton donor role is filled by His-44. NAD(+) is bound by residues 168–174, 224–225, and 304–306; these read ITMVDMS, WK, and GHE.

The protein belongs to the LDH2/MDH2 oxidoreductase family. DlgD subfamily. As to quaternary structure, homodimer.

It is found in the cytoplasm. The enzyme catalyses 3-dehydro-L-gulonate + NAD(+) = 2,3-dioxo-L-gulonate + NADH + H(+). It carries out the reaction 3-dehydro-L-gulonate + NADP(+) = 2,3-dioxo-L-gulonate + NADPH + H(+). In terms of biological role, catalyzes the reduction of 2,3-diketo-L-gulonate in the presence of NADH, to form 3-keto-L-gulonate. This Haemophilus influenzae (strain ATCC 51907 / DSM 11121 / KW20 / Rd) protein is 2,3-diketo-L-gulonate reductase.